The following is a 317-amino-acid chain: Putative S-adenosyl-L-methionine-dependent methyltransferase MSMEG_0093 (317 aa).

Residues Asp-134 and 163 to 164 (DL) each bind S-adenosyl-L-methionine.

This sequence belongs to the UPF0677 family.

Functionally, exhibits S-adenosyl-L-methionine-dependent methyltransferase activity. The sequence is that of Putative S-adenosyl-L-methionine-dependent methyltransferase MSMEG_0093 from Mycolicibacterium smegmatis (strain ATCC 700084 / mc(2)155) (Mycobacterium smegmatis).